A 375-amino-acid polypeptide reads, in one-letter code: Pectate lyase C (375 aa).

A signal peptide spans 1 to 22; that stretch reads MKSLITPITAGLLLALSQPLLA. Cys-94 and Cys-177 are joined by a disulfide. Asp-151, Asp-153, Glu-188, and Asp-192 together coordinate Ca(2+). The active site involves Arg-240. Cysteines 351 and 374 form a disulfide.

Belongs to the polysaccharide lyase 1 family. PLADES subfamily. Ca(2+) is required as a cofactor.

The protein localises to the secreted. The enzyme catalyses Eliminative cleavage of (1-&gt;4)-alpha-D-galacturonan to give oligosaccharides with 4-deoxy-alpha-D-galact-4-enuronosyl groups at their non-reducing ends.. Its pathway is glycan metabolism; pectin degradation; 2-dehydro-3-deoxy-D-gluconate from pectin: step 2/5. Its function is as follows. Involved in maceration and soft-rotting of plant tissue. This Dickeya chrysanthemi (Pectobacterium chrysanthemi) protein is Pectate lyase C.